The sequence spans 365 residues: Histidinol-phosphate aminotransferase (365 aa).

An N6-(pyridoxal phosphate)lysine modification is found at Lys-220.

Belongs to the class-II pyridoxal-phosphate-dependent aminotransferase family. Histidinol-phosphate aminotransferase subfamily. In terms of assembly, homodimer. The cofactor is pyridoxal 5'-phosphate.

It carries out the reaction L-histidinol phosphate + 2-oxoglutarate = 3-(imidazol-4-yl)-2-oxopropyl phosphate + L-glutamate. Its pathway is amino-acid biosynthesis; L-histidine biosynthesis; L-histidine from 5-phospho-alpha-D-ribose 1-diphosphate: step 7/9. In Xylella fastidiosa (strain 9a5c), this protein is Histidinol-phosphate aminotransferase.